Reading from the N-terminus, the 292-residue chain is 4-hydroxy-tetrahydrodipicolinate synthase 2 (292 aa).

Thr46 lines the pyruvate pocket. Tyr134 (proton donor/acceptor) is an active-site residue. Lys162 acts as the Schiff-base intermediate with substrate in catalysis. Val204 contributes to the pyruvate binding site.

It belongs to the DapA family. In terms of assembly, homotetramer; dimer of dimers.

Its subcellular location is the cytoplasm. It catalyses the reaction L-aspartate 4-semialdehyde + pyruvate = (2S,4S)-4-hydroxy-2,3,4,5-tetrahydrodipicolinate + H2O + H(+). The protein operates within amino-acid biosynthesis; L-lysine biosynthesis via DAP pathway; (S)-tetrahydrodipicolinate from L-aspartate: step 3/4. In terms of biological role, catalyzes the condensation of (S)-aspartate-beta-semialdehyde [(S)-ASA] and pyruvate to 4-hydroxy-tetrahydrodipicolinate (HTPA). This Halalkalibacterium halodurans (strain ATCC BAA-125 / DSM 18197 / FERM 7344 / JCM 9153 / C-125) (Bacillus halodurans) protein is 4-hydroxy-tetrahydrodipicolinate synthase 2.